Here is a 547-residue protein sequence, read N- to C-terminus: Threonylcarbamoyladenosine tRNA methylthiotransferase (547 aa).

Residues 30-51 (ARKSVVPRARKHKQETGEQMQT) are disordered. The 109-residue stretch at 59 to 167 (QKVWLKTWGC…VVEVVDEAIK (109 aa)) folds into the MTTase N-terminal domain. [4Fe-4S] cluster-binding residues include cysteine 68, cysteine 104, cysteine 133, cysteine 209, cysteine 213, and cysteine 216. A Radical SAM core domain is found at 195–426 (RKNPLIEIIS…ALFHSYRPYD (232 aa)). Residues 426–488 (DHKMGEQQQV…KHYMKGRPLE (63 aa)) form the TRAM domain. Residues 527 to 547 (ILAVVLLLSAVLLALLMEKLL) traverse the membrane as a helical segment.

It belongs to the methylthiotransferase family. CDKAL1 subfamily. [4Fe-4S] cluster is required as a cofactor.

The protein resides in the endoplasmic reticulum membrane. The catalysed reaction is N(6)-L-threonylcarbamoyladenosine(37) in tRNA + (sulfur carrier)-SH + AH2 + 2 S-adenosyl-L-methionine = 2-methylsulfanyl-N(6)-L-threonylcarbamoyladenosine(37) in tRNA + (sulfur carrier)-H + 5'-deoxyadenosine + L-methionine + A + S-adenosyl-L-homocysteine + 2 H(+). In terms of biological role, catalyzes the methylthiolation of N6-threonylcarbamoyladenosine (t(6)A), leading to the formation of 2-methylthio-N6-threonylcarbamoyladenosine (ms(2)t(6)A) at position 37 in tRNAs that read codons beginning with adenine. The protein is Threonylcarbamoyladenosine tRNA methylthiotransferase (cdkal1) of Danio rerio (Zebrafish).